The sequence spans 156 residues: Putative pre-16S rRNA nuclease (156 aa).

Belongs to the YqgF nuclease family.

Its subcellular location is the cytoplasm. Functionally, could be a nuclease involved in processing of the 5'-end of pre-16S rRNA. The protein is Putative pre-16S rRNA nuclease of Gloeobacter violaceus (strain ATCC 29082 / PCC 7421).